The following is a 541-amino-acid chain: Beta-hexosaminidase 1 (541 aa).

The first 20 residues, 1 to 20 (MSTNLLRLILLFITLSITSS), serve as a signal peptide directing secretion. 2 N-linked (GlcNAc...) asparagine glycosylation sites follow: Asn44 and Asn304. Cys295 and Cys337 are joined by a disulfide. Glu332 (proton donor) is an active-site residue. N-linked (GlcNAc...) asparagine glycans are attached at residues Asn340, Asn352, and Asn497. Cys511 and Cys538 are oxidised to a cystine.

This sequence belongs to the glycosyl hydrolase 20 family. N-glycosylated. Expressed in roots, leaves, stems, flowers and siliques.

It localises to the vacuole. The enzyme catalyses Hydrolysis of terminal non-reducing N-acetyl-D-hexosamine residues in N-acetyl-beta-D-hexosaminides.. Its activity is regulated as follows. Inhibited by N-acetylcastanospermine, 2-acet-amido-1,2-dideoxynojirimycin and PUGNAc. Its function is as follows. Has a broad substrate specificity. Can use synthetic substrates such as pyridylaminated chitotriose, pyridylaminated chitobiose, p-nitrophenyl-beta-N-acetylglucosaminide, p-nitrophenyl-2-acetamido-2-deoxy-beta-D-glucopyranoside (pNP-GlcNAc), p-nitrophenyl-2-acetamido-2-deoxy-beta-D-galactopyranoside (pNP-GalNAc), 4-methylumbelliferyl-2-acetamido-2-deoxy-beta-D-glucopyranoside (MU-GlcNAc), and 4-methylumbelliferyl-6-sulfo-2-acetamido-2-deoxy-beta-D-glucopyranoside (MU-GlcNAc-6SO(4)) as substrates. Removes terminal GlcNAc residues from alpha1,3- and alpha1,6-mannosyl branches of biantennary N-glycans without any strict branch preference. Required for the presence of paucimannosidic N-glycans in glycoproteins of roots and, to a lower extent, of leaves. The sequence is that of Beta-hexosaminidase 1 (HEXO1) from Arabidopsis thaliana (Mouse-ear cress).